Reading from the N-terminus, the 214-residue chain is MKIILLGAPGAGKGTQAQFIMNKFGIPQISTGDMFRAAIKAGTELGKQAKALMDEGKLVPDELTVALVKDRIAQADCANGFLLDGFPRTIPQADALKDSGVKIDFVLEFDVPDEVIVERMSGRRVHQTSGRSYHIVYNPPKVEGKDDVTGEDLIIRADDKPETVLDRLAVYHKQTSPLIDYYQAEAKAGNTQYFRLDGTQKVEEVSQELDKILG.

An ATP-binding site is contributed by 10-15 (GAGKGT). Residues 30 to 59 (STGDMFRAAIKAGTELGKQAKALMDEGKLV) form an NMP region. Residues T31, R36, 57 to 59 (KLV), 85 to 88 (GFPR), and Q92 contribute to the AMP site. Residues 122-159 (GRRVHQTSGRSYHIVYNPPKVEGKDDVTGEDLIIRADD) are LID. ATP contacts are provided by residues R123 and 132-133 (SY). AMP-binding residues include R156 and R167. Q200 contributes to the ATP binding site.

The protein belongs to the adenylate kinase family. In terms of assembly, monomer.

It localises to the cytoplasm. It catalyses the reaction AMP + ATP = 2 ADP. Its pathway is purine metabolism; AMP biosynthesis via salvage pathway; AMP from ADP: step 1/1. Functionally, catalyzes the reversible transfer of the terminal phosphate group between ATP and AMP. Plays an important role in cellular energy homeostasis and in adenine nucleotide metabolism. The polypeptide is Adenylate kinase (Haemophilus influenzae (strain PittEE)).